Here is a 258-residue protein sequence, read N- to C-terminus: Trans-aconitate 2-methyltransferase (258 aa).

The protein belongs to the methyltransferase superfamily. Tam family.

The protein resides in the cytoplasm. It catalyses the reaction trans-aconitate + S-adenosyl-L-methionine = (E)-3-(methoxycarbonyl)pent-2-enedioate + S-adenosyl-L-homocysteine. Functionally, catalyzes the S-adenosylmethionine monomethyl esterification of trans-aconitate. The sequence is that of Trans-aconitate 2-methyltransferase from Acidovorax sp. (strain JS42).